A 252-amino-acid polypeptide reads, in one-letter code: 3-deoxy-manno-octulosonate cytidylyltransferase (252 aa).

Belongs to the KdsB family.

It localises to the cytoplasm. It carries out the reaction 3-deoxy-alpha-D-manno-oct-2-ulosonate + CTP = CMP-3-deoxy-beta-D-manno-octulosonate + diphosphate. Its pathway is nucleotide-sugar biosynthesis; CMP-3-deoxy-D-manno-octulosonate biosynthesis; CMP-3-deoxy-D-manno-octulosonate from 3-deoxy-D-manno-octulosonate and CTP: step 1/1. It participates in bacterial outer membrane biogenesis; lipopolysaccharide biosynthesis. Activates KDO (a required 8-carbon sugar) for incorporation into bacterial lipopolysaccharide in Gram-negative bacteria. The protein is 3-deoxy-manno-octulosonate cytidylyltransferase of Phocaeicola vulgatus (strain ATCC 8482 / DSM 1447 / JCM 5826 / CCUG 4940 / NBRC 14291 / NCTC 11154) (Bacteroides vulgatus).